Reading from the N-terminus, the 420-residue chain is Type II methyltransferase M.NmeDI (420 aa).

Residues 1-23 (MMSLKIQPAVPKKSDKPSATNRD) form a disordered region. Positions 56 to 411 (TLIFSFFSGA…MTLKSYLENH (356 aa)) constitute an SAM-dependent MTase C5-type domain. C148 is a catalytic residue.

It belongs to the class I-like SAM-binding methyltransferase superfamily. C5-methyltransferase family.

The enzyme catalyses a 2'-deoxycytidine in DNA + S-adenosyl-L-methionine = a 5-methyl-2'-deoxycytidine in DNA + S-adenosyl-L-homocysteine + H(+). In terms of biological role, a methylase that recognizes the double-stranded sequence 5'-RCCGGB-3', methylates C-2 on both strands, and protects the DNA from cleavage by the NmeDI endonuclease. This is Type II methyltransferase M.NmeDI (nmeDIMP) from Neisseria meningitidis serogroup C.